Here is a 142-residue protein sequence, read N- to C-terminus: Class II hydrophobin 7 (142 aa).

A signal peptide spans 1–16; it reads MKFLTVAIVLAAAASA. Disulfide bonds link cysteine 73-cysteine 123, cysteine 84-cysteine 114, cysteine 85-cysteine 97, and cysteine 124-cysteine 135.

It belongs to the cerato-ulmin hydrophobin family. Homodimer. Homodimers further self-assemble to form highly ordered films at water-air interfaces through intermolecular interactions.

The protein resides in the secreted. Its subcellular location is the cell wall. In terms of biological role, aerial growth, conidiation, and dispersal of filamentous fungi in the environment rely upon a capability of their secreting small amphipathic proteins called hydrophobins (HPBs) with low sequence identity. Class I can self-assemble into an outermost layer of rodlet bundles on aerial cell surfaces, conferring cellular hydrophobicity that supports fungal growth, development and dispersal; whereas Class II form highly ordered films at water-air interfaces through intermolecular interactions but contribute nothing to the rodlet structure. The sequence is that of Class II hydrophobin 7 from Trichoderma asperellum (strain ATCC 204424 / CBS 433.97 / NBRC 101777).